A 97-amino-acid polypeptide reads, in one-letter code: Meromycolate extension acyl carrier protein (97 aa).

The Carrier domain maps to 3 to 81; it reads ASQQEIIAGL…DVVAYIQKLE (79 aa). The residue at position 41 (S41) is an O-(pantetheine 4'-phosphoryl)serine.

The protein belongs to the acyl carrier protein (ACP) family. In terms of processing, 4'-phosphopantetheine is transferred from CoA to a specific serine of apo-AcpM.

It localises to the cytoplasm. Acyl carrier protein involved in meromycolate extension. The polypeptide is Meromycolate extension acyl carrier protein (acpM) (Mycolicibacterium aurum (Mycobacterium aurum)).